We begin with the raw amino-acid sequence, 395 residues long: Putative gustatory receptor 93b (395 aa).

Residues 1–18 (MSGLLVMPRILRCLNVSR) lie on the Cytoplasmic side of the membrane. Residues 19–39 (ISAILLRSCFLYGTFFGVITF) traverse the membrane as a helical segment. The Extracellular segment spans residues 40 to 89 (RIERKDSQLVAINRRGYLWICLVIRLLASCFYGYSYDAWSGQYEDMYLRA). A helical transmembrane segment spans residues 90–110 (FFGFRLIGCLICSVIILVMQF). At 111 to 153 (WFGEELINLVNRFLQLFRRMQSLTNSPKNRFGDRAEFLLMFSK) the chain is on the cytoplasmic side. A helical membrane pass occupies residues 154–174 (VFSLLFVFMAFRLMLSPWFLL). The Extracellular portion of the chain corresponds to 175–183 (TLVCDLYTS). Residues 184–204 (VGTGMITHLCFVGYLSIGVLY) form a helical membrane-spanning segment. Over 205–267 (RDLNNYVDCQ…RSFQQLFDLP (63 aa)) the chain is Cytoplasmic. A helical membrane pass occupies residues 268–288 (LFLSLAQSLLAMSMVSYHAIL). At 289-293 (RRQYS) the chain is on the extracellular side. A helical membrane pass occupies residues 294–314 (FNLWGLVIKLLIDVVLLTMSV). The Cytoplasmic segment spans residues 315–369 (HSAVNGSRLIRRLSFENFYVTDSQSYHQKLELFLGRLQHQELRVFPLGLFEVSNE). A helical membrane pass occupies residues 370 to 390 (LTLFFLSAMVTYLVFLVQYGM). The Extracellular segment spans residues 391-395 (QSQQI).

It belongs to the insect chemoreceptor superfamily. Gustatory receptor (GR) family. Gr93a subfamily. In larvae, is expressed in neurons of the terminal external chemosensory organ and of the dorsal pharyngeal sense organ.

The protein localises to the cell membrane. Its function is as follows. Probable gustatory receptor which mediates acceptance or avoidance behavior, depending on its substrates. This chain is Putative gustatory receptor 93b (Gr93b), found in Drosophila melanogaster (Fruit fly).